A 196-amino-acid chain; its full sequence is UMP-CMP kinase (196 aa).

Position 13 to 18 (13 to 18 (GAGKGT)) interacts with ATP. Serine 33 carries the phosphoserine modification. The segment at 33 to 63 (SAGELLRDERKNPDSQYGELIEKYIKEGKIV) is NMP. Arginine 39 contacts a ribonucleoside 5'-phosphate. An N6-acetyllysine mark is found at lysine 43 and lysine 55. A ribonucleoside 5'-phosphate is bound at residue 61–63 (KIV). A Glycyl lysine isopeptide (Lys-Gly) (interchain with G-Cter in SUMO2) cross-link involves residue lysine 73. 93–96 (GFPR) serves as a coordination point for a ribonucleoside 5'-phosphate. Asparagine 100 serves as a coordination point for CMP. Lysine 106 carries the post-translational modification N6-succinyllysine. The segment at 133 to 143 (ERGKSSGRSDD) is LID. Residue arginine 134 coordinates ATP. A ribonucleoside 5'-phosphate contacts are provided by arginine 140 and arginine 151. Lysine 179 serves as a coordination point for ATP. A Phosphoserine modification is found at serine 180.

The protein belongs to the adenylate kinase family. UMP-CMP kinase subfamily. As to quaternary structure, monomer. Mg(2+) is required as a cofactor.

It localises to the nucleus. Its subcellular location is the cytoplasm. It carries out the reaction CMP + ATP = CDP + ADP. The catalysed reaction is dCMP + ATP = dCDP + ADP. The enzyme catalyses UMP + ATP = UDP + ADP. It catalyses the reaction a 2'-deoxyribonucleoside 5'-diphosphate + ATP = a 2'-deoxyribonucleoside 5'-triphosphate + ADP. It carries out the reaction a ribonucleoside 5'-diphosphate + ATP = a ribonucleoside 5'-triphosphate + ADP. In terms of biological role, catalyzes the phosphorylation of pyrimidine nucleoside monophosphates at the expense of ATP. Plays an important role in de novo pyrimidine nucleotide biosynthesis. Has preference for UMP and CMP as phosphate acceptors. Also displays broad nucleoside diphosphate kinase activity. In Rattus norvegicus (Rat), this protein is UMP-CMP kinase (Cmpk1).